The following is a 342-amino-acid chain: Nicotinate-nucleotide--dimethylbenzimidazole phosphoribosyltransferase (342 aa).

Residue Glu311 is the Proton acceptor of the active site.

This sequence belongs to the CobT family.

The catalysed reaction is 5,6-dimethylbenzimidazole + nicotinate beta-D-ribonucleotide = alpha-ribazole 5'-phosphate + nicotinate + H(+). Its pathway is nucleoside biosynthesis; alpha-ribazole biosynthesis; alpha-ribazole from 5,6-dimethylbenzimidazole: step 1/2. Functionally, catalyzes the synthesis of alpha-ribazole-5'-phosphate from nicotinate mononucleotide (NAMN) and 5,6-dimethylbenzimidazole (DMB). This Shewanella piezotolerans (strain WP3 / JCM 13877) protein is Nicotinate-nucleotide--dimethylbenzimidazole phosphoribosyltransferase.